A 448-amino-acid chain; its full sequence is Tubulin alpha-4A chain (448 aa).

The MREC motif motif lies at 1–4; sequence MREC. Residue Gln11 coordinates GTP. N6-acetyllysine is present on Lys40. A Phosphoserine modification is found at Ser48. Glu71 contributes to the GTP binding site. Residue Glu71 participates in Mg(2+) binding. At Tyr83 the chain carries 3'-nitrotyrosine. Residues Ser140, Gly144, Thr145, Thr179, Asn206, and Asn228 each coordinate GTP. Glu254 is a catalytic residue. Residue Tyr432 is modified to Phosphotyrosine. Ser439 bears the Phosphoserine mark.

It belongs to the tubulin family. Dimer of alpha and beta chains. A typical microtubule is a hollow water-filled tube with an outer diameter of 25 nm and an inner diameter of 15 nM. Alpha-beta heterodimers associate head-to-tail to form protofilaments running lengthwise along the microtubule wall with the beta-tubulin subunit facing the microtubule plus end conferring a structural polarity. Microtubules usually have 13 protofilaments but different protofilament numbers can be found in some organisms and specialized cells. Interacts with CFAP157. Requires Mg(2+) as cofactor. Post-translationally, some glutamate residues at the C-terminus are polyglycylated, resulting in polyglycine chains on the gamma-carboxyl group. Glycylation is mainly limited to tubulin incorporated into axonemes (cilia and flagella) whereas glutamylation is prevalent in neuronal cells, centrioles, axonemes, and the mitotic spindle. Both modifications can coexist on the same protein on adjacent residues, and lowering polyglycylation levels increases polyglutamylation, and reciprocally. Cilia and flagella glycylation is required for their stability and maintenance. Flagella glycylation controls sperm motility. Some glutamate residues at the C-terminus are polyglutamylated, resulting in polyglutamate chains on the gamma-carboxyl group. Polyglutamylation plays a key role in microtubule severing by spastin (SPAST). SPAST preferentially recognizes and acts on microtubules decorated with short polyglutamate tails: severing activity by SPAST increases as the number of glutamates per tubulin rises from one to eight, but decreases beyond this glutamylation threshold. Glutamylation is also involved in cilia motility. In terms of processing, acetylation of alpha chains at Lys-40 is located inside the microtubule lumen. This modification has been correlated with increased microtubule stability, intracellular transport and ciliary assembly. Post-translationally, methylation of alpha chains at Lys-40 is found in mitotic microtubules and is required for normal mitosis and cytokinesis contributing to genomic stability. Although this tubulin does not encode a C-terminal tyrosine, a C-terminal tyrosine can be added post-translationally by the tubulin tyrosine ligase (TTL). It can then undergo a detyrosination cycle by the tubulin tyrosine carboxypeptidase (MATCAP1/KIAA0895L).

It is found in the cytoplasm. Its subcellular location is the cytoskeleton. It carries out the reaction GTP + H2O = GDP + phosphate + H(+). In terms of biological role, tubulin is the major constituent of microtubules, a cylinder consisting of laterally associated linear protofilaments composed of alpha- and beta-tubulin heterodimers. Microtubules grow by the addition of GTP-tubulin dimers to the microtubule end, where a stabilizing cap forms. Below the cap, tubulin dimers are in GDP-bound state, owing to GTPase activity of alpha-tubulin. The polypeptide is Tubulin alpha-4A chain (TUBA4A) (Macaca fascicularis (Crab-eating macaque)).